A 508-amino-acid chain; its full sequence is MQMGDHQMMGNQRYYRTYVQKVMPAQAGGAVSQNATYVQTAGIRTVHHDGNGQQRIVQLPPGVRQIQQNGVGPAYVRQVPGGQPMQVNFGHPGTIAGRNVAVGVQMRPVQGHNVQQGYQRQQVANQIQQQNRAVFMAQNQQGQQQISYAQAQHRQQQQNQQQHHQQPQHFNHPSQQNQMIMQHRQPQMHHNQQHQMVQPQMTRHQMAQHHAQQPHPQIYVPRDMNLAVPLREPSPEPIPVKIEVPDVPPEGTSAANEEPMPDDGDIDIQIRNVVCNYTLPLHIDLRKLAMNTHNVTYEREKGVMMKQKRSPGCYIKVYSSGKVYIVGCRSEADCKRAARSIARHVQRVMGKTKERVSIRNYRVNNVLATCRLPFGIKIEEVAAKYPSESTYEPELSVGLVWRSVTPKATLRIHTTGSITVTGAQSEADVLEVLSKIYPIVLEFRCLERAKGNVAAQKKRKRKAPVNRGPPIKRERFDDSNYRNSGVINNQVYFSDEDEDLYDELDLEE.

Disordered regions lie at residues 145–190, 236–262, and 456–479; these read QISY…QMHH, EPIPVKIEVPDVPPEGTSAANEEPMPD, and QKKRKRKAPVNRGPPIKRERFDDS.

It belongs to the TBP family.

The protein resides in the nucleus. May be a general transcription factor. Plays an essential role for RNA polymerase II/ama-1 transcription in early embryos whereby it activates a subset of RNA polymerase II promoters and facilitates the reestablishment of transcription after mitosis. The protein is TATA box-binding protein-like 1 of Caenorhabditis elegans.